The following is a 342-amino-acid chain: Alanine racemase (342 aa).

K33 (proton acceptor; specific for D-alanine) is an active-site residue. N6-(pyridoxal phosphate)lysine is present on K33. R128 contacts substrate. The Proton acceptor; specific for L-alanine role is filled by Y240. Position 288 (M288) interacts with substrate.

This sequence belongs to the alanine racemase family. Pyridoxal 5'-phosphate is required as a cofactor.

The enzyme catalyses L-alanine = D-alanine. Its pathway is amino-acid biosynthesis; D-alanine biosynthesis; D-alanine from L-alanine: step 1/1. Functionally, catalyzes the interconversion of L-alanine and D-alanine. May also act on other amino acids. This Jannaschia sp. (strain CCS1) protein is Alanine racemase (alr).